A 402-amino-acid chain; its full sequence is Acetate kinase (402 aa).

Asn10 provides a ligand contact to Mg(2+). ATP is bound at residue Lys17. Arg89 provides a ligand contact to substrate. Asp148 serves as the catalytic Proton donor/acceptor. Residues 208 to 212 (HLGNG), 283 to 285 (DCR), and 334 to 338 (GIGEN) each bind ATP. Glu389 contacts Mg(2+).

It belongs to the acetokinase family. As to quaternary structure, homodimer. Requires Mg(2+) as cofactor. The cofactor is Mn(2+).

The protein localises to the cytoplasm. It catalyses the reaction acetate + ATP = acetyl phosphate + ADP. The protein operates within metabolic intermediate biosynthesis; acetyl-CoA biosynthesis; acetyl-CoA from acetate: step 1/2. Functionally, catalyzes the formation of acetyl phosphate from acetate and ATP. Can also catalyze the reverse reaction. In Actinobacillus pleuropneumoniae serotype 7 (strain AP76), this protein is Acetate kinase.